A 654-amino-acid polypeptide reads, in one-letter code: Biotin-dependent 3-methylcrotonyl-coenzyme A carboxylase alpha1 subunit (654 aa).

The region spanning 1 to 448 (MFDTVLVANR…DTAVLDERSA (448 aa)) is the Biotin carboxylation domain. The ATP-grasp domain occupies 120-319 (KNAVAAFDVP…LVEWQLRVGA (200 aa)). An ATP-binding site is contributed by 148 to 209 (AAEVGYPVLI…ERFVLRPRHI (62 aa)). Residues Glu-275, Glu-290, and Asn-292 each contribute to the Mg(2+) site. Residues Glu-275, Glu-290, and Asn-292 each contribute to the Mn(2+) site. The 76-residue stretch at 578-653 (HRAVGARPAE…KVEQVLARIK (76 aa)) folds into the Biotinyl-binding domain. Position 620 is an N6-biotinyllysine (Lys-620).

The biotin-dependent acyl-CoA carboxylase complex is composed of AccA1, which contains the biotin carboxylase (BC) and biotin carboxyl carrier protein (BCCP) domains, and AccD1, which contains the carboxyl transferase (CT) domain. The AccA1/AccD1 complex forms a dodecamer. Mg(2+) is required as a cofactor. Requires Mn(2+) as cofactor. It depends on biotin as a cofactor.

It carries out the reaction N(6)-biotinyl-L-lysyl-[protein] + hydrogencarbonate + ATP = N(6)-carboxybiotinyl-L-lysyl-[protein] + ADP + phosphate + H(+). The protein operates within amino-acid degradation; L-leucine degradation. In terms of biological role, component of a biotin-dependent acyl-CoA carboxylase complex. This subunit catalyzes the ATP-dependent carboxylation of the biotin carried by the biotin carboxyl carrier (BCC) domain, resulting in the formation of carboxyl biotin. When associated with the beta1 subunit AccD1, is involved in branched amino-acid catabolism with methylcrotonyl coenzyme A as the substrate. This is Biotin-dependent 3-methylcrotonyl-coenzyme A carboxylase alpha1 subunit (accA1) from Mycobacterium bovis (strain ATCC BAA-935 / AF2122/97).